A 236-amino-acid chain; its full sequence is 2,3,4,5-tetrahydropyridine-2,6-dicarboxylate N-acetyltransferase (236 aa).

The protein belongs to the transferase hexapeptide repeat family. DapH subfamily.

The catalysed reaction is (S)-2,3,4,5-tetrahydrodipicolinate + acetyl-CoA + H2O = L-2-acetamido-6-oxoheptanedioate + CoA. It functions in the pathway amino-acid biosynthesis; L-lysine biosynthesis via DAP pathway; LL-2,6-diaminopimelate from (S)-tetrahydrodipicolinate (acetylase route): step 1/3. Functionally, catalyzes the transfer of an acetyl group from acetyl-CoA to tetrahydrodipicolinate. The polypeptide is 2,3,4,5-tetrahydropyridine-2,6-dicarboxylate N-acetyltransferase (Bacillus velezensis (strain DSM 23117 / BGSC 10A6 / LMG 26770 / FZB42) (Bacillus amyloliquefaciens subsp. plantarum)).